Reading from the N-terminus, the 317-residue chain is Acetyl-coenzyme A carboxylase carboxyl transferase subunit alpha (317 aa).

A CoA carboxyltransferase C-terminal domain is found at 39–293 (RLESKAAAAL…EEAIAEGLAG (255 aa)).

Belongs to the AccA family. In terms of assembly, acetyl-CoA carboxylase is a heterohexamer composed of biotin carboxyl carrier protein (AccB), biotin carboxylase (AccC) and two subunits each of ACCase subunit alpha (AccA) and ACCase subunit beta (AccD).

Its subcellular location is the cytoplasm. The catalysed reaction is N(6)-carboxybiotinyl-L-lysyl-[protein] + acetyl-CoA = N(6)-biotinyl-L-lysyl-[protein] + malonyl-CoA. The protein operates within lipid metabolism; malonyl-CoA biosynthesis; malonyl-CoA from acetyl-CoA: step 1/1. In terms of biological role, component of the acetyl coenzyme A carboxylase (ACC) complex. First, biotin carboxylase catalyzes the carboxylation of biotin on its carrier protein (BCCP) and then the CO(2) group is transferred by the carboxyltransferase to acetyl-CoA to form malonyl-CoA. In Methylobacterium sp. (strain 4-46), this protein is Acetyl-coenzyme A carboxylase carboxyl transferase subunit alpha.